A 493-amino-acid chain; its full sequence is Phospholipid transfer protein (493 aa).

The signal sequence occupies residues Met1–Ala17. Asn64, Asn91, Asn94, Asn117, and Asn143 each carry an N-linked (GlcNAc...) asparagine glycan. Cys146 and Cys185 are joined by a disulfide. N-linked (GlcNAc...) asparagine glycosylation is found at Asn245 and Asn398.

Belongs to the BPI/LBP/Plunc superfamily. BPI/LBP family. Post-translationally, glycosylation is necessary for secretion and its phospholipid transfer activity. In terms of tissue distribution, highest level expression in the lung, brain and heart with relatively low levels in the liver, skeletal muscle and testis and very low levels found in the spleen and kidney.

Its subcellular location is the secreted. It localises to the nucleus. The catalysed reaction is a 1,2-diacyl-sn-glycero-3-phosphocholine(in) = a 1,2-diacyl-sn-glycero-3-phosphocholine(out). It catalyses the reaction a 1,2-diacyl-sn-glycero-3-phosphoethanolamine(in) = a 1,2-diacyl-sn-glycero-3-phosphoethanolamine(out). The enzyme catalyses a 1,2-diacyl-sn-glycerol(in) = a 1,2-diacyl-sn-glycerol(out). It carries out the reaction a 1,2-diacyl-sn-glycero-3-phosphate(in) = a 1,2-diacyl-sn-glycero-3-phosphate(out). The catalysed reaction is a sphingomyelin(in) = a sphingomyelin(out). It catalyses the reaction a 1,2-diacyl-sn-glycero-3-phospho-(1'-sn-glycerol)(in) = a 1,2-diacyl-sn-glycero-3-phospho-(1'-sn-glycerol)(out). The enzyme catalyses a 1,2-diacyl-sn-glycero-3-phospho-(1D-myo-inositol)(in) = a 1,2-diacyl-sn-glycero-3-phospho-(1D-myo-inositol)(out). It carries out the reaction 1-hexadecanoyl-2-(5Z,8Z,11Z,14Z-eicosatetraenoyl)-sn-glycero-3-phosphoethanolamine(in) = 1-hexadecanoyl-2-(5Z,8Z,11Z,14Z-eicosatetraenoyl)-sn-glycero-3-phosphoethanolamine(out). The catalysed reaction is N-(hexadecanoyl)-sphing-4-enine-1-phosphocholine(in) = N-(hexadecanoyl)-sphing-4-enine-1-phosphocholine(out). It catalyses the reaction 1,2-dihexadecanoyl-sn-glycero-3-phosphocholine(in) = 1,2-dihexadecanoyl-sn-glycero-3-phosphocholine(out). Mediates the transfer of phospholipids and free cholesterol from triglyceride-rich lipoproteins (low density lipoproteins or LDL and very low density lipoproteins or VLDL) into high-density lipoproteins (HDL) as well as the exchange of phospholipids between triglyceride-rich lipoproteins themselves. Facilitates the transfer of a spectrum of different lipid molecules, including sphingomyelin, phosphatidylcholine, phosphatidylinositol, phosphatidylglycerol, and phosphatidyl ethanolamine. Plays an important role in HDL remodeling which involves modulating the size and composition of HDL. Also plays a key role in the uptake of cholesterol from peripheral cells and tissues that is subsequently transported to the liver for degradation and excretion. Two distinct forms of PLTP exist in plasma: an active form that can transfer phosphatidylcholine from phospholipid vesicles to HDL, and an inactive form that lacks this capability. This chain is Phospholipid transfer protein (Pltp), found in Mus musculus (Mouse).